The sequence spans 332 residues: Glycerol-3-phosphate dehydrogenase [NAD(P)+] (332 aa).

Residues serine 15, tryptophan 16, and lysine 110 each coordinate NADPH. Positions 110, 137, and 139 each coordinate sn-glycerol 3-phosphate. An NADPH-binding site is contributed by alanine 141. Residues lysine 192, aspartate 245, serine 255, arginine 256, and asparagine 257 each coordinate sn-glycerol 3-phosphate. Residue lysine 192 is the Proton acceptor of the active site. NADPH is bound at residue arginine 256. Position 282 (glutamate 282) interacts with NADPH.

It belongs to the NAD-dependent glycerol-3-phosphate dehydrogenase family.

Its subcellular location is the cytoplasm. The catalysed reaction is sn-glycerol 3-phosphate + NAD(+) = dihydroxyacetone phosphate + NADH + H(+). The enzyme catalyses sn-glycerol 3-phosphate + NADP(+) = dihydroxyacetone phosphate + NADPH + H(+). Its pathway is membrane lipid metabolism; glycerophospholipid metabolism. Functionally, catalyzes the reduction of the glycolytic intermediate dihydroxyacetone phosphate (DHAP) to sn-glycerol 3-phosphate (G3P), the key precursor for phospholipid synthesis. This chain is Glycerol-3-phosphate dehydrogenase [NAD(P)+], found in Coxiella burnetii (strain CbuG_Q212) (Coxiella burnetii (strain Q212)).